Here is a 286-residue protein sequence, read N- to C-terminus: 33 kDa chaperonin (286 aa).

Intrachain disulfides connect Cys-225-Cys-227 and Cys-258-Cys-261.

The protein belongs to the HSP33 family. Post-translationally, under oxidizing conditions two disulfide bonds are formed involving the reactive cysteines. Under reducing conditions zinc is bound to the reactive cysteines and the protein is inactive.

It localises to the cytoplasm. Its function is as follows. Redox regulated molecular chaperone. Protects both thermally unfolding and oxidatively damaged proteins from irreversible aggregation. Plays an important role in the bacterial defense system toward oxidative stress. This Shewanella woodyi (strain ATCC 51908 / MS32) protein is 33 kDa chaperonin.